Here is a 67-residue protein sequence, read N- to C-terminus: Large ribosomal subunit protein uL29 (67 aa).

Belongs to the universal ribosomal protein uL29 family.

The chain is Large ribosomal subunit protein uL29 from Ruminiclostridium cellulolyticum (strain ATCC 35319 / DSM 5812 / JCM 6584 / H10) (Clostridium cellulolyticum).